Here is a 185-residue protein sequence, read N- to C-terminus: Dual-action ribosomal maturation protein DarP (185 aa).

The protein belongs to the DarP family.

It is found in the cytoplasm. Functionally, member of a network of 50S ribosomal subunit biogenesis factors which assembles along the 30S-50S interface, preventing incorrect 23S rRNA structures from forming. Promotes peptidyl transferase center (PTC) maturation. In Vibrio vulnificus (strain YJ016), this protein is Dual-action ribosomal maturation protein DarP.